A 189-amino-acid polypeptide reads, in one-letter code: Small ribosomal subunit protein uS5 (189 aa).

Positions F22–V85 constitute an S5 DRBM domain.

This sequence belongs to the universal ribosomal protein uS5 family. As to quaternary structure, part of the 30S ribosomal subunit. Contacts proteins S4 and S8.

With S4 and S12 plays an important role in translational accuracy. Functionally, located at the back of the 30S subunit body where it stabilizes the conformation of the head with respect to the body. The protein is Small ribosomal subunit protein uS5 of Sinorhizobium medicae (strain WSM419) (Ensifer medicae).